The sequence spans 78 residues: Surfactant-associated protein 2 (78 aa).

Positions 1–19 are cleaved as a signal peptide; it reads MGSGLPLVLLLTLLGSSHG. Residue Asn-37 is glycosylated (N-linked (GlcNAc...) asparagine).

In terms of processing, N-glycosylated. Predominantly expressed in lung, where it is detected in type II pneumocytes in the alveolus, and in nonciliated epithelium in bronchioli (at protein level). Also detected at lower levels in cervix, esophagus, stomach, testis and kidney.

It localises to the secreted. It is found in the cytoplasmic vesicle. The protein resides in the secretory vesicle. The protein localises to the golgi apparatus. In terms of biological role, putative surfactant protein. The protein is Surfactant-associated protein 2 (SFTA2) of Homo sapiens (Human).